Consider the following 147-residue polypeptide: 3-dehydroquinate dehydratase (147 aa).

Residue tyrosine 23 is the Proton acceptor of the active site. Asparagine 74, histidine 80, and aspartate 87 together coordinate substrate. Histidine 100 serves as the catalytic Proton donor. Substrate contacts are provided by residues 101-102 and arginine 111; that span reads LS.

The protein belongs to the type-II 3-dehydroquinase family. In terms of assembly, homododecamer.

It catalyses the reaction 3-dehydroquinate = 3-dehydroshikimate + H2O. It functions in the pathway metabolic intermediate biosynthesis; chorismate biosynthesis; chorismate from D-erythrose 4-phosphate and phosphoenolpyruvate: step 3/7. Its function is as follows. Catalyzes a trans-dehydration via an enolate intermediate. The sequence is that of 3-dehydroquinate dehydratase from Clostridium botulinum (strain Okra / Type B1).